The sequence spans 535 residues: Glutamate--cysteine ligase (535 aa).

It belongs to the glutamate--cysteine ligase type 1 family. Type 1 subfamily.

It carries out the reaction L-cysteine + L-glutamate + ATP = gamma-L-glutamyl-L-cysteine + ADP + phosphate + H(+). The protein operates within sulfur metabolism; glutathione biosynthesis; glutathione from L-cysteine and L-glutamate: step 1/2. This chain is Glutamate--cysteine ligase, found in Pseudomonas syringae pv. syringae.